We begin with the raw amino-acid sequence, 260 residues long: Indole-3-glycerol phosphate synthase (260 aa).

This sequence belongs to the TrpC family.

It catalyses the reaction 1-(2-carboxyphenylamino)-1-deoxy-D-ribulose 5-phosphate + H(+) = (1S,2R)-1-C-(indol-3-yl)glycerol 3-phosphate + CO2 + H2O. Its pathway is amino-acid biosynthesis; L-tryptophan biosynthesis; L-tryptophan from chorismate: step 4/5. This chain is Indole-3-glycerol phosphate synthase, found in Staphylococcus aureus (strain COL).